Here is a 129-residue protein sequence, read N- to C-terminus: Glycine cleavage system H protein (129 aa).

One can recognise a Lipoyl-binding domain in the interval 24–106 (SYTVGISEHA…FGDGWFFRVM (83 aa)). K65 carries the post-translational modification N6-lipoyllysine.

This sequence belongs to the GcvH family. As to quaternary structure, the glycine cleavage system is composed of four proteins: P, T, L and H. (R)-lipoate serves as cofactor.

The glycine cleavage system catalyzes the degradation of glycine. The H protein shuttles the methylamine group of glycine from the P protein to the T protein. This chain is Glycine cleavage system H protein, found in Shewanella halifaxensis (strain HAW-EB4).